The sequence spans 72 residues: Translation initiation factor IF-1 (72 aa).

One can recognise an S1-like domain in the interval 1–72 (MAKDDVIQMQ…SRARIVFRAK (72 aa)).

Belongs to the IF-1 family. Component of the 30S ribosomal translation pre-initiation complex which assembles on the 30S ribosome in the order IF-2 and IF-3, IF-1 and N-formylmethionyl-tRNA(fMet); mRNA recruitment can occur at any time during PIC assembly.

It localises to the cytoplasm. Its function is as follows. One of the essential components for the initiation of protein synthesis. Stabilizes the binding of IF-2 and IF-3 on the 30S subunit to which N-formylmethionyl-tRNA(fMet) subsequently binds. Helps modulate mRNA selection, yielding the 30S pre-initiation complex (PIC). Upon addition of the 50S ribosomal subunit IF-1, IF-2 and IF-3 are released leaving the mature 70S translation initiation complex. The sequence is that of Translation initiation factor IF-1 from Burkholderia mallei (strain NCTC 10247).